The sequence spans 109 residues: Spermidine export protein MdtI (109 aa).

The next 4 membrane-spanning stretches (helical) occupy residues 6-26 (WVHG…NVLL), 36-56 (CYGI…SQAV), 64-84 (AYAL…WVLF), and 88-108 (LNPK…MIKL).

It belongs to the drug/metabolite transporter (DMT) superfamily. Small multidrug resistance (SMR) (TC 2.A.7.1) family. MdtI subfamily. In terms of assembly, forms a complex with MdtJ.

It localises to the cell inner membrane. Functionally, catalyzes the excretion of spermidine. In Salmonella arizonae (strain ATCC BAA-731 / CDC346-86 / RSK2980), this protein is Spermidine export protein MdtI.